We begin with the raw amino-acid sequence, 715 residues long: Forkhead box protein P2 (715 aa).

Polar residues predominate over residues Met1 to Asp28. Disordered stretches follow at residues Met1–Thr46 and Asp281–Ser339. Residues Thr292–Ser305 show a composition bias toward low complexity. Basic and acidic residues predominate over residues Ala326–Gly337. A C2H2-type zinc finger spans residues Gly346 to His371. The leucine-zipper stretch occupies residues Val388–Leu409. Residues Pro422–Val426 form a CTBP1-binding region. A compositionally biased stretch (low complexity) spans Thr438–Gln459. The interval Thr438–Thr465 is disordered. A DNA-binding region (fork-head) is located at residues Arg504–Leu594. 2 disordered regions span residues Leu649 to Ile668 and Val678 to Glu715. A compositionally biased stretch (acidic residues) spans Leu699–Glu715.

Forms homodimers and heterodimers with FOXP1 and FOXP4. Dimerization is required for DNA-binding. Interacts with CTBP1. Interacts with FOXP1. Isoform 1 and isoform 3 interact with TBR1. Interacts with ZMYM2. As to expression, isoform 1 and isoform 6 are expressed in adult and fetal brain, caudate nucleus and lung.

It localises to the nucleus. Transcriptional repressor that may play a role in the specification and differentiation of lung epithelium. May also play a role in developing neural, gastrointestinal and cardiovascular tissues. Can act with CTBP1 to synergistically repress transcription but CTPBP1 is not essential. Plays a role in synapse formation by regulating SRPX2 levels. Involved in neural mechanisms mediating the development of speech and language. The chain is Forkhead box protein P2 (FOXP2) from Homo sapiens (Human).